A 428-amino-acid polypeptide reads, in one-letter code: D-amino acid dehydrogenase (428 aa).

3-17 (VVVLGSGVVGVASAY) is an FAD binding site.

Belongs to the DadA oxidoreductase family. It depends on FAD as a cofactor.

The catalysed reaction is a D-alpha-amino acid + A + H2O = a 2-oxocarboxylate + AH2 + NH4(+). Its pathway is amino-acid degradation; D-alanine degradation; NH(3) and pyruvate from D-alanine: step 1/1. Oxidative deamination of D-amino acids. The sequence is that of D-amino acid dehydrogenase from Burkholderia ambifaria (strain MC40-6).